The following is a 429-amino-acid chain: Uterine milk protein (429 aa).

The first 25 residues, 1-25 (MSHRRMQLALSLVFILCGLFNSIFC), serve as a signal peptide directing secretion. 2 N-linked (GlcNAc...) asparagine glycosylation sites follow: N222 and N268.

It belongs to the serpin family. UTMP subfamily. Glycosylated; carries the so-called mannose 6-phosphate lysosomal recognition marker on its carbohydrate chains. As to expression, secreted by ovine endometrium under the influence of progesterone.

The chain is Uterine milk protein from Ovis aries (Sheep).